A 394-amino-acid polypeptide reads, in one-letter code: Phosphoglycerate kinase (394 aa).

Substrate is bound by residues 21–23, arginine 37, 60–63, arginine 119, and arginine 152; these read DFN and HLGR. ATP contacts are provided by residues lysine 202, glutamate 324, and 350-353; that span reads GGDS.

This sequence belongs to the phosphoglycerate kinase family. Monomer.

It is found in the cytoplasm. It catalyses the reaction (2R)-3-phosphoglycerate + ATP = (2R)-3-phospho-glyceroyl phosphate + ADP. It functions in the pathway carbohydrate degradation; glycolysis; pyruvate from D-glyceraldehyde 3-phosphate: step 2/5. This is Phosphoglycerate kinase from Herpetosiphon aurantiacus (strain ATCC 23779 / DSM 785 / 114-95).